A 2710-amino-acid polypeptide reads, in one-letter code: MANFSSHIQELRELIAASSTTTSTSAPASVHFEVKLREVLPNLLRDYVVPSSPTADGREATAVLKLLSYTAGKFPGVFFHGRAADVIRVIGRVLPFFAEPNFRSRHEIIFDTVWSLLSLLRTGDREAYRQFFLDVMVAVQDVLYVVASMHGDRPSGVLTERYLVKCLCGSFSDILDSPGIFSDLPDSCQPKNGPGVLVDLTGETRWRPFATMLIKLVNKCLADGTLYVEGLVNMPFVSAACSIICYGDESLHKVCFDFARIVATVITVEILPVENIIRSIMCILSQDVNGLSDIRDADYDFSMGACLHALHSSCPGYIVAITASDIVNVFQRAVHTSRSSELQVAMCNAYKRIVELCSPRVWKPEILLKLLCLPKPCAKLIECIRLVVDKSGQSFLSSDDRDDGSSLLAKSEGLDLPKVGQKRIALDEENSFPKRLKMTEPRFSSGSFMVDELSAGVGQELEKDHGCDFRVQLYSLINCLSPDNHMAYPLEPAIAIQVLSLLCLSLSVYPKTNLFSRISKQVLSWIPWICKQTTKICMFSFDVSLYFEAVQTVMLLQSFLPGHTKLFEDEPLLIGNGCTDFEYPRYADLINLLKLVSDDGYLTSQTCSEKLKCLAVQIIAKIGSRQNAECDLQVLELAIQSETGELQNEALMSLPIIVLYSGPRMLGAMFRKLETIGTLGCKKLWKSIAISLGFLSCLNGTTDCTDKVGNHCKLFLAKHCEQPILTLNLLRGFWCPQCDVRTVHIEDQVPIVDIALSEDKNIDFKINMFKAHSLFFKFLYAETSEECIVSIVEVLPRILKHSSRDVLLDMKFQWVQCVDFLLLHEMKAVRDAFSSVVSCFLETNAMDILFSDGTGMSGGTSRVKFMDKIKSAFTEAEDPQILLTLLESTAAIVKASDIHGEVFFCSFVLLIGQLGNHDYIVRVTALRLLQRCCTYCFKGGLELFLSKYFHVRDNLYDYLSSRLLTHPVVISEFAESVLGVKTEELIRRMVPSIIPKLIVSHQNNDQAVVTLNELASHLNSELVPLIVNSLPKVLSFALFYEDGQHLSSVLQFYHTETGTDSKEIFSAALPTLLDEIICFPGESDQIETDRRMAKISPTIQNIARILIGNDNLPEFLKNDFVRLLNSIDKKMLHSSDVNLQKQALQRIRKLVEMMGPYLSTHAPKIMVLLIFAIDKETLQMDGLDVLHFFIKRLAEVSCTSIKYVMSQVVAAFIPSLERCRERPLVHLGKIVEILEELVVKNIILLKQHIRELPLLPSLPSLSGVNKVIQEARGLMTLQDHLKDAVNGLNHESLNVRYMVACELNKLFNDRREDITSLIIGEDIADLDIISSLIMSLLKGCAEESRTVVGQRLKLVCADCLGALGAVDPAKFKVMSCERFKIECSDDDLIFELIHKHLARAFRAASDTTVQDSAALAIQELLKLSGCQSLPNESSSCKMSKRGQKLWGRFSSYVKEIIAPCLTSRFHLPSVNDATLAGPIYRPTMSFRRWIYYWIRKLTSHATGSRSGIFGACRGIVRHDMPTAIYLLPYLVLNVVCYGTPEARQSITEEILSVLNAAASESSGAIVHGITGGQSEVCIQAVFTLLDNLGQWVDDLKQEIALSQSNYAMAGRQGGKLRDESNSMYDQDQLLVQCSNVAELLAAIPKVTLAKASFRCQAHARALMYFESHVREKSGSSNPAADCSGAFSDDDISFLMEIYGGLDEPDGLLGLANLRKSSTLQDQLIINEKAGNWAEVLTLCEQSLQMEPDSVHRHCDVLNCLLNMCHLQAMIAHVDGLVYRIPQSKKTWCMQGVQAAWRLGRWDLMDEYLAEADKGLVCRSSENNASFDMGLAKIFNAMMKKDQFMVAEKIAQSKQALLVPLAAAGMDSYMRAYPYIVKLHMLRELEDFNSLLGDESFLEKPFAADDPKFLKLTKDWENRLRCTQPSLWAREPLLAFRRMVYNLSHMNAQAGNCWLQYARLCRLAGHYETAHRAILEADASGAPNAHMEKAKYLWNIRKSDSAIAELQQTLLNMPADVLGPTVLSSLSSLSLALPNAPLSVTQASKENPDVSKTLLLYTRWIHYTGQKQSNDIKSLYSRVADLRPKWEKGFFCIAKFYDDLLVDARRRQEDKKIASGVGPVPPSSTGSLTTATEEKPWWDMLPVVLIQYARGLHRGHKNLFQALPRLLTLWFEFGSIYIQDGSSFNKPMKEVHIRLLGIMRGCLKDLPPYQWLTVLSQLISRICHQNIEVVKLVKCIVTSILREYPQQALWMMAAVSKSTVAARRDAAAEILQSAKKGSRRGSDSNALFMQFPSLIDHLIKLCFHPGQPKARAINISTEFSSLKRMMPLGIILPIQQALTVTLPSYDTNMTDQSTFRPFSVSEHPTIAGIADDAEILNSLQKPKKVVFIGSDGISRPFLCKPKDDLRKDSRMMEFNAMINRLLSKVPESRRRKLYIRTFAVVPLTEDCGMVEWVPNTRGLRQILQDIYITCGKFDRMKTNPQIKKIYDQLQGKMPEEMLKAKILPMFPPVFHKWFLTTFSEPAAWIRARAAYAHTTAVWSMVGHIVGLGDRHGENILLDSTTGDCIHVDFSCLFDKGLLLEKPEVVPFRFTQNMVDGLGITGYEGVFVKVCEITLSVLRTHKEALMTVLETFIHDPLVEWTKSHKSSGVEVRNPHAQRAISNITERLQGVVVGVNAAPSLPLSVEGQARRLIAEAVSHSNLGKMYVWWMAWF.

The FAT domain maps to 1647–2257 (TLAKASFRCQ…LWMMAAVSKS (611 aa)). The 313-residue stretch at 2368–2680 (IADDAEILNS…GVNAAPSLPL (313 aa)) folds into the PI3K/PI4K catalytic domain. The interval 2374 to 2380 (ILNSLQK) is G-loop. The tract at residues 2545 to 2553 (GLGDRHGEN) is catalytic loop. An activation loop region spans residues 2565 to 2589 (HVDFSCLFDKGLLLEKPEVVPFRFT). The FATC domain occupies 2678-2710 (LPLSVEGQARRLIAEAVSHSNLGKMYVWWMAWF).

This sequence belongs to the PI3/PI4-kinase family. ATM subfamily.

Its subcellular location is the nucleus. It carries out the reaction L-seryl-[protein] + ATP = O-phospho-L-seryl-[protein] + ADP + H(+). The enzyme catalyses L-threonyl-[protein] + ATP = O-phospho-L-threonyl-[protein] + ADP + H(+). Functionally, probable serine/threonine kinase. Seems to play a central role in cell-cycle regulation by transmitting DNA damage signals to downstream effectors of cell-cycle progression. May recognize the substrate consensus sequence [ST]-Q and phosphorylate histone variant H2AX to form H2AXS139ph at sites of DNA damage, thereby regulating DNA damage response mechanism. The protein is Serine/threonine-protein kinase ATR of Oryza sativa subsp. indica (Rice).